A 349-amino-acid chain; its full sequence is Small ribosomal subunit protein uS2 (349 aa).

It belongs to the universal ribosomal protein uS2 family.

This is Small ribosomal subunit protein uS2 from Methylocella silvestris (strain DSM 15510 / CIP 108128 / LMG 27833 / NCIMB 13906 / BL2).